The primary structure comprises 159 residues: NADH-quinone oxidoreductase subunit B (159 aa).

4 residues coordinate [4Fe-4S] cluster: Cys37, Cys38, Cys102, and Cys132.

Belongs to the complex I 20 kDa subunit family. In terms of assembly, NDH-1 is composed of 14 different subunits. Subunits NuoB, C, D, E, F, and G constitute the peripheral sector of the complex. [4Fe-4S] cluster serves as cofactor.

It localises to the cell inner membrane. The enzyme catalyses a quinone + NADH + 5 H(+)(in) = a quinol + NAD(+) + 4 H(+)(out). NDH-1 shuttles electrons from NADH, via FMN and iron-sulfur (Fe-S) centers, to quinones in the respiratory chain. Couples the redox reaction to proton translocation (for every two electrons transferred, four hydrogen ions are translocated across the cytoplasmic membrane), and thus conserves the redox energy in a proton gradient. The chain is NADH-quinone oxidoreductase subunit B from Vesicomyosocius okutanii subsp. Calyptogena okutanii (strain HA).